The chain runs to 153 residues: 3-hydroxyacyl-[acyl-carrier-protein] dehydratase FabZ (153 aa).

Residue His-54 is part of the active site.

The protein belongs to the thioester dehydratase family. FabZ subfamily.

The protein resides in the cytoplasm. The catalysed reaction is a (3R)-hydroxyacyl-[ACP] = a (2E)-enoyl-[ACP] + H2O. Involved in unsaturated fatty acids biosynthesis. Catalyzes the dehydration of short chain beta-hydroxyacyl-ACPs and long chain saturated and unsaturated beta-hydroxyacyl-ACPs. This Shewanella sediminis (strain HAW-EB3) protein is 3-hydroxyacyl-[acyl-carrier-protein] dehydratase FabZ.